A 116-amino-acid chain; its full sequence is M-zodatoxin-Lt6a/b (116 aa).

An N-terminal signal peptide occupies residues 1–22 (MKYFVVALTLAVAFVCIEECKT). 2 consecutive propeptides follow at residues 23–44 (VEIGYAVSEDFDQNEIDNEEAR) and 80–83 (EEAR). Short sequence motifs (processing quadruplet motif) lie at residues 41 to 44 (EEAR) and 80 to 83 (EEAR). A Pyrrolidone carboxylic acid modification is found at glutamine 84.

The protein belongs to the cationic peptide 03 (latarcin) family. 06 subfamily. In terms of processing, cleavage of the propeptide depends on the processing quadruplet motif (XXXR, with at least one of X being E). In terms of tissue distribution, expressed by the venom gland.

The protein resides in the secreted. Does not have antimicrobial activity against neither Gram-positive bacteria (A.globiformis VKM Ac-1112 (MIC&gt;70 uM), and B.subtilis VKM B-501 (MIC&gt;70 uM)), nor Gram-negative bacteria (E.coli DH5-alpha (MIC&gt;70 uM), E.coli MH1 (MIC&gt;70 uM), and P.aeruginosa PAO1 (MIC&gt;70 uM)), nor yeasts (P.pastoris GS115 (MIC&gt;70 uM), and S.cerevisiae Y190 (MIC&gt;70 uM)). Does not have hemolytic activity against rabbit erythrocytes. However, it causes some conductance changes in planar bilayer membranes, without membrane rupture, suggesting a cytolytic function on other biological targets. It causes paralysis, but is not lethal when injected into insect (M.domestica) larvae. The polypeptide is M-zodatoxin-Lt6a/b (Lachesana tarabaevi (Spider)).